The primary structure comprises 488 residues: MYYIDGKTARWEVVIGLEVHAQILSKNKLFSDAPCDSTKGPNTAVTLFDAAMPGVLPVLNFNCVEKAIRAGLGLGGKINLYSVFERKHYFYPDLPHGYQITQNSYPIITGGCVRIRNPDKVIRINRIHIEQDAGKSIHNLAPGKTYIDLNRAGIPLMEIVSEPDISSPAEAVAYVDKLKLILQYVCASNANMEKGELRCDANVSVRRGGESGLGTRCEIKNLNSTKSLAQAIEHEAKRQVEVLESGGTIVVETKLFDVDTLSTIATRSKESATEYRYFADPDLLPLVLEEKYVEDIKASMPELPDERENRYVRELNLSPYDANVLVSNVNASRYFDALLELGHQPKLAARWITVELFGLLNKRGIKIVESPVTPALMDELLRLVHSAEISERTAKEVLRKSFEGMGSPKEIVERESLRQVTDDKVILGYVKEVLDENPTKLGEYFMGKEKMLAFLVGQVIKKSNGNASPHLVNKVLLEELERRRAQNG.

It belongs to the GatB/GatE family. GatB subfamily. Heterotrimer of A, B and C subunits.

The enzyme catalyses L-glutamyl-tRNA(Gln) + L-glutamine + ATP + H2O = L-glutaminyl-tRNA(Gln) + L-glutamate + ADP + phosphate + H(+). It catalyses the reaction L-aspartyl-tRNA(Asn) + L-glutamine + ATP + H2O = L-asparaginyl-tRNA(Asn) + L-glutamate + ADP + phosphate + 2 H(+). Its function is as follows. Allows the formation of correctly charged Asn-tRNA(Asn) or Gln-tRNA(Gln) through the transamidation of misacylated Asp-tRNA(Asn) or Glu-tRNA(Gln) in organisms which lack either or both of asparaginyl-tRNA or glutaminyl-tRNA synthetases. The reaction takes place in the presence of glutamine and ATP through an activated phospho-Asp-tRNA(Asn) or phospho-Glu-tRNA(Gln). This Neorickettsia sennetsu (strain ATCC VR-367 / Miyayama) (Ehrlichia sennetsu) protein is Aspartyl/glutamyl-tRNA(Asn/Gln) amidotransferase subunit B.